The sequence spans 266 residues: Transcription factor BIP1 (266 aa).

A disordered region spans residues 1 to 73 (MAMYMPSTAS…DREAQRAIRA (73 aa)). Composition is skewed to polar residues over residues 7–22 (STASSTTHIRSPSGTP) and 47–56 (RSVSTLTPSQ). In terms of domain architecture, bZIP spans 54–95 (PSQLARKRANDREAQRAIRARTKEHIERLEREVEELKSKQNR). Residues 59–81 (RKRANDREAQRAIRARTKEHIER) are basic motif. The span at 61–73 (RANDREAQRAIRA) shows a compositional bias: basic and acidic residues. A leucine-zipper region spans residues 82 to 89 (LEREVEEL).

This sequence belongs to the bZIP family. In terms of tissue distribution, expressed in appressoria.

The protein localises to the nucleus. Its function is as follows. Transcription factor that is required for infection of plants hosts. Is not implicated in the development of appressoria or the subsequent penetration of host leaves, but is necessary for the initial establishment of the fungus within plant cells by orchestrating the expression of a unique set of early invasion-related genes within appressoria, encoding secreted effectors, enzymes, secondary metabolism-related enzymes, and signaling membrane receptors. Controls the expression of targeted genes by interacting directly with a 5'-TGACTC-3' motif present in their promoters. This chain is Transcription factor BIP1, found in Pyricularia oryzae (strain 70-15 / ATCC MYA-4617 / FGSC 8958) (Rice blast fungus).